The sequence spans 260 residues: 1-(5-phosphoribosyl)-5-[(5-phosphoribosylamino)methylideneamino] imidazole-4-carboxamide isomerase (260 aa).

Asp8 functions as the Proton acceptor in the catalytic mechanism. The Proton donor role is filled by Asp130.

Belongs to the HisA/HisF family.

It is found in the cytoplasm. The catalysed reaction is 1-(5-phospho-beta-D-ribosyl)-5-[(5-phospho-beta-D-ribosylamino)methylideneamino]imidazole-4-carboxamide = 5-[(5-phospho-1-deoxy-D-ribulos-1-ylimino)methylamino]-1-(5-phospho-beta-D-ribosyl)imidazole-4-carboxamide. It participates in amino-acid biosynthesis; L-histidine biosynthesis; L-histidine from 5-phospho-alpha-D-ribose 1-diphosphate: step 4/9. The protein is 1-(5-phosphoribosyl)-5-[(5-phosphoribosylamino)methylideneamino] imidazole-4-carboxamide isomerase of Chlorobaculum tepidum (strain ATCC 49652 / DSM 12025 / NBRC 103806 / TLS) (Chlorobium tepidum).